Here is a 414-residue protein sequence, read N- to C-terminus: MIKAQSLDGLFEKLLDGKSIFKNKEVLRPSYTPDLLLHRNEQINSLATILVSALRGETPSNVLIYGKTGTGKTAVTRYVGKELERVSEDKSLFCSVVYINCEVIDTQYRLLANLARHFEEEVPMTGWPTDQVFMKFKEAIDARDQVIIIILDEIDKLIKKGDDVLYNLSRINTDLRKAKVSMIGVSNDLKFTEFLDPRVKSSLGEEELIFPPYDAEQISDILKQRAKMAYNDGVLGEMVIPLCAAFAAQEHGDARRALDLLRVSGEIAERENQPQVLEEHVRRAQEKIEIDRVVEVVRTLPTQSKLVLYSIILLRSRGREGKNVTTGEMYNVYRQLCHHIDVDILTQRRVTDLMSELDMLGIVNAVVVSKGRYGRTKEISLSVPVENTRKVLLEDYRLKPLVDFKTAVFNKMFS.

Residues 70-74, Tyr-213, and Arg-225 contribute to the ATP site; that span reads TGKTA.

Belongs to the CDC6/cdc18 family.

Involved in regulation of DNA replication. The polypeptide is ORC1-type DNA replication protein 1 (cdc6-1) (Methanosarcina acetivorans (strain ATCC 35395 / DSM 2834 / JCM 12185 / C2A)).